A 344-amino-acid chain; its full sequence is tRNA dimethylallyltransferase (344 aa).

Position 43-50 (43-50 (GPTCCGKS)) interacts with ATP. Residue 45-50 (TCCGKS) coordinates substrate. The interaction with substrate tRNA stretch occupies residues 68-71 (DSMQ).

Belongs to the IPP transferase family. Monomer. The cofactor is Mg(2+).

The catalysed reaction is adenosine(37) in tRNA + dimethylallyl diphosphate = N(6)-dimethylallyladenosine(37) in tRNA + diphosphate. Its function is as follows. Catalyzes the transfer of a dimethylallyl group onto the adenine at position 37 in tRNAs that read codons beginning with uridine, leading to the formation of N6-(dimethylallyl)adenosine (i(6)A). This is tRNA dimethylallyltransferase from Protochlamydia amoebophila (strain UWE25).